The following is an 827-amino-acid chain: Periplasmic nitrate reductase (827 aa).

A signal peptide (tat-type signal) is located at residues 1-32; that stretch reads MNLSRRDFMKANAALAAASVAGLIIPVKNVNA. The 4Fe-4S Mo/W bis-MGD-type domain occupies 37–93; it reads ITWDKAVCRFCGTGCAVLVGTKDGRVVASQGDPDAEVNRGLNCIKGYFLPKIMYGKD. Positions 44, 47, 51, and 79 each coordinate [4Fe-4S] cluster. Residues Lys81, Gln148, Asn173, Cys177, 210–217, 242–246, 261–263, Met372, Gln376, Asn482, 508–509, Lys531, Asp558, and 717–726 contribute to the Mo-bis(molybdopterin guanine dinucleotide) site; these read WGSNMAEM, STFEH, QSD, SD, and TGRILEHWHT. Position 793 (Phe793) interacts with substrate. 2 residues coordinate Mo-bis(molybdopterin guanine dinucleotide): Asn801 and Lys818.

The protein belongs to the prokaryotic molybdopterin-containing oxidoreductase family. NasA/NapA/NarB subfamily. Component of the periplasmic nitrate reductase NapAB complex composed of NapA and NapB. [4Fe-4S] cluster is required as a cofactor. Mo-bis(molybdopterin guanine dinucleotide) serves as cofactor. Post-translationally, predicted to be exported by the Tat system. The position of the signal peptide cleavage has not been experimentally proven.

It localises to the periplasm. It carries out the reaction 2 Fe(II)-[cytochrome] + nitrate + 2 H(+) = 2 Fe(III)-[cytochrome] + nitrite + H2O. Catalytic subunit of the periplasmic nitrate reductase complex NapAB. Receives electrons from NapB and catalyzes the reduction of nitrate to nitrite. The chain is Periplasmic nitrate reductase from Histophilus somni (strain 129Pt) (Haemophilus somnus).